Consider the following 834-residue polypeptide: Semaphorin-4C (834 aa).

Positions 1-20 are cleaved as a signal peptide; the sequence is MAPHWAVWLLAAGLWGLGIG. The Extracellular segment spans residues 21–664; that stretch reads AEMWWNLVPR…EARAPLENLG (644 aa). Residues 30–497 form the Sema domain; it reads RKTVSSGELV…SRSQLVQLSL (468 aa). Residues 46–489 are dominant negative effect on myogenic differentiation; sequence SQTGIQDFLT…SKKVLFAGSR (444 aa). Residues Cys99 and Cys110 are joined by a disulfide bond. Residues Asn106 and Asn121 are each glycosylated (N-linked (GlcNAc...) asparagine). Disulfide bonds link Cys128/Cys137, Cys261/Cys370, and Cys285/Cys330. 2 N-linked (GlcNAc...) asparagine glycosylation sites follow: Asn310 and Asn419. Positions 499-552 constitute a PSI domain; that stretch reads DCTKYRFCVDCVLARDPYCAWNVNTSRCVATTSGRSGSFLVQHVANLDTSKMCN. Cystine bridges form between Cys500–Cys517 and Cys509–Cys526. 2 N-linked (GlcNAc...) asparagine glycosylation sites follow: Asn522 and Asn565. The Ig-like C2-type domain maps to 557–645; the sequence is KKVRSIPKNI…RLAAESYLVA (89 aa). An intrachain disulfide couples Cys578 to Cys628. Residues 665–685 form a helical membrane-spanning segment; that stretch reads LVWLAVVALGAVCLVLLLLVL. Over 686 to 834 the chain is Cytoplasmic; sequence SLRRRLREEL…PDSNPEESSV (149 aa). Phosphoserine is present on Ser743. The disordered stretch occupies residues 749-834; that stretch reads GHARCQPGGG…PDSNPEESSV (86 aa). A compositionally biased stretch (pro residues) spans 757 to 773; it reads GGPPSPPPGIPGQPLPS. The PDZ-binding signature appears at 831-834; the sequence is ESSV.

Belongs to the semaphorin family. As to quaternary structure, interacts (via the PDZ-binding motif) with GIPC (via the PDZ domain). Interacts with NCDN. Interacts (via the PDZ-binding motif) with DLG4. Interacts with PLXNB2. Predominantly expressed in brain (at protein level).

The protein resides in the postsynaptic density membrane. It localises to the cytoplasmic vesicle. Its subcellular location is the secretory vesicle. It is found in the synaptic vesicle membrane. Cell surface receptor for PLXNB2 that plays an important role in cell-cell signaling. PLXNB2 binding promotes downstream activation of RHOA and phosphorylation of ERBB2 at 'Tyr-1248'. Required for normal brain development, axon guidance and cell migration. Probable signaling receptor which may play a role in myogenic differentiation through activation of the stress-activated MAPK cascade. This is Semaphorin-4C (Sema4c) from Mus musculus (Mouse).